Consider the following 109-residue polypeptide: Flagellar hook-basal body complex protein FliE (109 aa).

It belongs to the FliE family.

The protein resides in the bacterial flagellum basal body. The polypeptide is Flagellar hook-basal body complex protein FliE (Pseudomonas savastanoi pv. phaseolicola (strain 1448A / Race 6) (Pseudomonas syringae pv. phaseolicola (strain 1448A / Race 6))).